Reading from the N-terminus, the 439-residue chain is Agnestins biosynthesis cluster transcriptional coactivator AgnL9 (439 aa).

An HTH iclR-type domain is found at 79 to 149; that stretch reads MTIQTQLLAC…EPGHITHSAL (71 aa). A DNA-binding region (H-T-H motif) is located at residues 109 to 128; it reads MKDVSELIDVPENQLGRIVR.

The protein resides in the nucleus. Functionally, transcriptional coactivator; part of the gene cluster that mediates the biosynthesis of agnestins, dihydroxy-xanthone metabolites. The sequence is that of Agnestins biosynthesis cluster transcriptional coactivator AgnL9 from Paecilomyces divaricatus (Penicillium divaricatum).